Consider the following 428-residue polypeptide: MSNALPKGVFDIFPYVTSPKNLWRNSSLWKRVEHAAHRICNLYGFDEIRTPVFEKTETFLRVGEYSDIVKKEVYTFLDKKRRSLTLRPEGTAAVVRALLDHSADMRKDNKFYYILPMFRYERQQSGRYRQHHQFGLEAIGVRHPLRDAEVLSLLWDFYAAVGLQHMQIHVNFLGGQKTRARYDEALREFFRKDLDRLSPLSQERYHANLLRILDSKEPEDQEFIEKAPSILDYIDDRDLSYFDAVLAQLKALGISFAINPRLVRGLDYYTDLVFEAVTVVGEHSYALGGGGRYDELVAQSGGPSMPAFGFGVGLERVIQTLLEQGNSLSTSTRRLRLIPMDEQADAFCFSWANRLRNLGIATEVDWSHKKPKLSLKDAADQQVSFVCLLGEQELATKQFIVKDMSLHQSFSGAQQDVEQRLVYEVQNA.

It belongs to the class-II aminoacyl-tRNA synthetase family. Homodimer.

It localises to the cytoplasm. The enzyme catalyses tRNA(His) + L-histidine + ATP = L-histidyl-tRNA(His) + AMP + diphosphate + H(+). In Chlamydia trachomatis serovar A (strain ATCC VR-571B / DSM 19440 / HAR-13), this protein is Histidine--tRNA ligase.